The sequence spans 357 residues: Ribosomal RNA large subunit methyltransferase M (357 aa).

Residues Ser190, 223–226, Asp242, Asp262, and Asp278 each bind S-adenosyl-L-methionine; that span reads APGG. Catalysis depends on Lys307, which acts as the Proton acceptor.

The protein belongs to the class I-like SAM-binding methyltransferase superfamily. RNA methyltransferase RlmE family. RlmM subfamily. Monomer.

It localises to the cytoplasm. It catalyses the reaction cytidine(2498) in 23S rRNA + S-adenosyl-L-methionine = 2'-O-methylcytidine(2498) in 23S rRNA + S-adenosyl-L-homocysteine + H(+). Functionally, catalyzes the 2'-O-methylation at nucleotide C2498 in 23S rRNA. This chain is Ribosomal RNA large subunit methyltransferase M, found in Chromohalobacter salexigens (strain ATCC BAA-138 / DSM 3043 / CIP 106854 / NCIMB 13768 / 1H11).